The chain runs to 450 residues: tRNA-2-methylthio-N(6)-dimethylallyladenosine synthase (450 aa).

The region spanning 14 to 132 (GEFFIETWGC…FPNYLNEVKK (119 aa)) is the MTTase N-terminal domain. [4Fe-4S] cluster contacts are provided by Cys23, Cys59, Cys93, Cys169, Cys173, and Cys176. Residues 155-385 (RKNSMKAFVT…VEVVNEISAK (231 aa)) form the Radical SAM core domain. One can recognise a TRAM domain in the interval 388–450 (KAYEGKIEEV…NSFSLTGEEI (63 aa)).

The protein belongs to the methylthiotransferase family. MiaB subfamily. In terms of assembly, monomer. [4Fe-4S] cluster serves as cofactor.

The protein resides in the cytoplasm. The catalysed reaction is N(6)-dimethylallyladenosine(37) in tRNA + (sulfur carrier)-SH + AH2 + 2 S-adenosyl-L-methionine = 2-methylsulfanyl-N(6)-dimethylallyladenosine(37) in tRNA + (sulfur carrier)-H + 5'-deoxyadenosine + L-methionine + A + S-adenosyl-L-homocysteine + 2 H(+). Its function is as follows. Catalyzes the methylthiolation of N6-(dimethylallyl)adenosine (i(6)A), leading to the formation of 2-methylthio-N6-(dimethylallyl)adenosine (ms(2)i(6)A) at position 37 in tRNAs that read codons beginning with uridine. The polypeptide is tRNA-2-methylthio-N(6)-dimethylallyladenosine synthase (Clostridium botulinum (strain Okra / Type B1)).